We begin with the raw amino-acid sequence, 389 residues long: Terminal nucleotidyltransferase 5D (389 aa).

The protein belongs to the TENT family. Restricted to testis.

It carries out the reaction RNA(n) + ATP = RNA(n)-3'-adenine ribonucleotide + diphosphate. In terms of biological role, catalyzes the transfer of one adenosine molecule from an ATP to an mRNA poly(A) tail bearing a 3'-OH terminal group. The sequence is that of Terminal nucleotidyltransferase 5D from Homo sapiens (Human).